The following is a 514-amino-acid chain: Peptide chain release factor 3 (514 aa).

Residues 8–268 form the tr-type G domain; it reads KKRRTFAIIS…SFLAFAPEPH (261 aa). GTP-binding positions include 17 to 24, 85 to 89, and 139 to 142; these read SHPDAGKT, DTPGH, and NKLD.

Belongs to the TRAFAC class translation factor GTPase superfamily. Classic translation factor GTPase family. PrfC subfamily.

It localises to the cytoplasm. In terms of biological role, increases the formation of ribosomal termination complexes and stimulates activities of RF-1 and RF-2. It binds guanine nucleotides and has strong preference for UGA stop codons. It may interact directly with the ribosome. The stimulation of RF-1 and RF-2 is significantly reduced by GTP and GDP, but not by GMP. This is Peptide chain release factor 3 from Streptococcus mutans serotype c (strain ATCC 700610 / UA159).